The following is a 92-amino-acid chain: Large ribosomal subunit protein eL43 (92 aa).

The C4-type zinc finger occupies 39 to 60 (CSFCGKKTVRRGAAGIWSCHSC).

Belongs to the eukaryotic ribosomal protein eL43 family.

The protein is Large ribosomal subunit protein eL43 (RPL43) of Candida glabrata (strain ATCC 2001 / BCRC 20586 / JCM 3761 / NBRC 0622 / NRRL Y-65 / CBS 138) (Yeast).